The chain runs to 157 residues: MHCPFCNTVDTKVIDSRLVSEGSQIKRRRQCAICHERFTTLEHAELVMPRVIKNDDLLEPFNEQKLRSGMRKALEKRPVSTDALETAIHQIKSQLRATGEPEVPSKMLGQFVMEALKKLDKIAYIRFASVYRSFEDVREFGEEIAKLQDNPSLHQKD.

The segment at 3-34 is a zinc-finger region; sequence CPFCNTVDTKVIDSRLVSEGSQIKRRRQCAIC. An ATP-cone domain is found at 49–139; sequence PRVIKNDDLL…VYRSFEDVRE (91 aa).

It belongs to the NrdR family. Zn(2+) is required as a cofactor.

Its function is as follows. Negatively regulates transcription of bacterial ribonucleotide reductase nrd genes and operons by binding to NrdR-boxes. This chain is Transcriptional repressor NrdR, found in Hamiltonella defensa subsp. Acyrthosiphon pisum (strain 5AT).